The primary structure comprises 349 residues: Peptide transport system ATP-binding protein SapD (349 aa).

The region spanning 1 to 259 is the ABC transporter domain; it reads MALLDICNLN…PHHPYTQALI (259 aa). Residue 40–47 coordinates ATP; it reads GESGSGKS.

The protein belongs to the ABC transporter superfamily.

Its subcellular location is the cell inner membrane. Its function is as follows. Involved in a peptide intake transport system that plays a role in the resistance to antimicrobial peptides. This Haemophilus influenzae (strain ATCC 51907 / DSM 11121 / KW20 / Rd) protein is Peptide transport system ATP-binding protein SapD (sapD).